A 588-amino-acid chain; its full sequence is MFS siderochrome iron transporter 1 (588 aa).

Transmembrane regions (helical) follow at residues 60–80, 104–124, 133–153, 161–181, 191–211, 225–245, 278–298, 307–327, 348–368, 385–405, 413–433, 440–460, and 473–495; these read QVWSKGHLIFAYVMIWVITFV, LTASTMIMSNIIGGLIKLPLA, PQGFLIMVGALTIGLVMMAAC, AAQVFYWVGYNGMSYTISIFI, ALMFAFVSSPYIATVWVGGPL, YGAFAIITPAITCPLYAVFAW, IIGIILLASGLALFLLPFSLY, SSLVISMIIVGGLLLIAFALY, LGACILAASLFVSFYIWDSYF, YIVNIYSIGACFWSIIVGILV, WLALYFGVPLTILGVGLMITF, IGYIIMCQIFIAFAGGTCVIT, and YVAVVLAVESMFANIGGAIGQTV. Asn519 is a glycosylation site (N-linked (GlcNAc...) asparagine). A helical transmembrane segment spans residues 552-572; that stretch reads KYMLIGGTAILAVGLGATMMW.

The protein belongs to the major facilitator superfamily.

The protein resides in the membrane. Functionally, major facilitator transporter involved in siderophore transport. In Ajellomyces capsulatus (Darling's disease fungus), this protein is MFS siderochrome iron transporter 1.